Consider the following 270-residue polypeptide: Dermonecrotic toxin LhSicTox-alphaIA2aiii (270 aa).

The active site involves H2. Positions 22 and 24 each coordinate Mg(2+). Residue H38 is the Nucleophile of the active site. Intrachain disulfides connect C42–C48 and C44–C187. D82 contributes to the Mg(2+) binding site.

Belongs to the arthropod phospholipase D family. Class II subfamily. It depends on Mg(2+) as a cofactor. Expressed by the venom gland.

The protein resides in the secreted. It carries out the reaction an N-(acyl)-sphingosylphosphocholine = an N-(acyl)-sphingosyl-1,3-cyclic phosphate + choline. The catalysed reaction is an N-(acyl)-sphingosylphosphoethanolamine = an N-(acyl)-sphingosyl-1,3-cyclic phosphate + ethanolamine. The enzyme catalyses a 1-acyl-sn-glycero-3-phosphocholine = a 1-acyl-sn-glycero-2,3-cyclic phosphate + choline. It catalyses the reaction a 1-acyl-sn-glycero-3-phosphoethanolamine = a 1-acyl-sn-glycero-2,3-cyclic phosphate + ethanolamine. Functionally, dermonecrotic toxins cleave the phosphodiester linkage between the phosphate and headgroup of certain phospholipids (sphingolipid and lysolipid substrates), forming an alcohol (often choline) and a cyclic phosphate. This toxin acts on sphingomyelin (SM). It may also act on ceramide phosphoethanolamine (CPE), lysophosphatidylcholine (LPC) and lysophosphatidylethanolamine (LPE), but not on lysophosphatidylserine (LPS), and lysophosphatidylglycerol (LPG). It acts by transphosphatidylation, releasing exclusively cyclic phosphate products as second products. Induces dermonecrosis, hemolysis, increased vascular permeability, edema, inflammatory response, and platelet aggregation. The polypeptide is Dermonecrotic toxin LhSicTox-alphaIA2aiii (Loxosceles hirsuta (Recluse spider)).